The chain runs to 217 residues: Small ribosomal subunit protein uS3 (217 aa).

Residues 38–106 form the KH type-2 domain; the sequence is IRKFIDNELK…KVHINVIEIK (69 aa).

It belongs to the universal ribosomal protein uS3 family. In terms of assembly, part of the 30S ribosomal subunit. Forms a tight complex with proteins S10 and S14.

Binds the lower part of the 30S subunit head. Binds mRNA in the 70S ribosome, positioning it for translation. The chain is Small ribosomal subunit protein uS3 from Staphylococcus aureus (strain MSSA476).